A 482-amino-acid chain; its full sequence is Aspartyl/glutamyl-tRNA(Asn/Gln) amidotransferase subunit B (482 aa).

Belongs to the GatB/GatE family. GatB subfamily. Heterotrimer of A, B and C subunits.

The catalysed reaction is L-glutamyl-tRNA(Gln) + L-glutamine + ATP + H2O = L-glutaminyl-tRNA(Gln) + L-glutamate + ADP + phosphate + H(+). It catalyses the reaction L-aspartyl-tRNA(Asn) + L-glutamine + ATP + H2O = L-asparaginyl-tRNA(Asn) + L-glutamate + ADP + phosphate + 2 H(+). In terms of biological role, allows the formation of correctly charged Asn-tRNA(Asn) or Gln-tRNA(Gln) through the transamidation of misacylated Asp-tRNA(Asn) or Glu-tRNA(Gln) in organisms which lack either or both of asparaginyl-tRNA or glutaminyl-tRNA synthetases. The reaction takes place in the presence of glutamine and ATP through an activated phospho-Asp-tRNA(Asn) or phospho-Glu-tRNA(Gln). The sequence is that of Aspartyl/glutamyl-tRNA(Asn/Gln) amidotransferase subunit B from Azotobacter vinelandii (strain DJ / ATCC BAA-1303).